The sequence spans 476 residues: Aspartyl/glutamyl-tRNA(Asn/Gln) amidotransferase subunit B (476 aa).

This sequence belongs to the GatB/GatE family. GatB subfamily. In terms of assembly, heterotrimer of A, B and C subunits.

The catalysed reaction is L-glutamyl-tRNA(Gln) + L-glutamine + ATP + H2O = L-glutaminyl-tRNA(Gln) + L-glutamate + ADP + phosphate + H(+). The enzyme catalyses L-aspartyl-tRNA(Asn) + L-glutamine + ATP + H2O = L-asparaginyl-tRNA(Asn) + L-glutamate + ADP + phosphate + 2 H(+). Its function is as follows. Allows the formation of correctly charged Asn-tRNA(Asn) or Gln-tRNA(Gln) through the transamidation of misacylated Asp-tRNA(Asn) or Glu-tRNA(Gln) in organisms which lack either or both of asparaginyl-tRNA or glutaminyl-tRNA synthetases. The reaction takes place in the presence of glutamine and ATP through an activated phospho-Asp-tRNA(Asn) or phospho-Glu-tRNA(Gln). This is Aspartyl/glutamyl-tRNA(Asn/Gln) amidotransferase subunit B from Moorella thermoacetica (strain ATCC 39073 / JCM 9320).